Here is a 341-residue protein sequence, read N- to C-terminus: Homeobox protein knotted-1-like 8 (341 aa).

Low complexity predominate over residues 1 to 17 (MESFASLAGGGSSSTTA). Disordered regions lie at residues 1 to 72 (MESF…AVQG), 121 to 148 (AAQQ…DQLD), and 187 to 207 (AESN…SDKQ). Positions 187–196 (AESNCEGTGS) are enriched in polar residues. An ELK domain is found at 207–227 (QLKHQLLRKYGGSLGDLRQVF). A DNA-binding region (homeobox; TALE-type) is located at residues 228-291 (SKRTKKGKLP…NQRKRHWKPT (64 aa)).

This sequence belongs to the TALE/KNOX homeobox family.

The protein localises to the nucleus. Functionally, probable transcription factor that may be involved in shoot formation during embryogenesis. This chain is Homeobox protein knotted-1-like 8 (OSH43), found in Oryza sativa subsp. japonica (Rice).